Consider the following 289-residue polypeptide: Protoheme IX farnesyltransferase (289 aa).

9 consecutive transmembrane segments (helical) span residues 9–29 (VALM…PVMM), 40–60 (LIAV…TINC), 89–109 (LTFG…LVNW), 110–130 (PSAL…TLGL), 134–154 (TPSN…IGWS), 155–175 (AVTG…FFWT), 190–209 (YAAA…VVTR), 228–248 (VAST…WFLV), and 269–289 (FHMS…TALV).

It belongs to the UbiA prenyltransferase family. Protoheme IX farnesyltransferase subfamily.

The protein localises to the cell membrane. It catalyses the reaction heme b + (2E,6E)-farnesyl diphosphate + H2O = Fe(II)-heme o + diphosphate. Its pathway is porphyrin-containing compound metabolism; heme O biosynthesis; heme O from protoheme: step 1/1. Converts heme B (protoheme IX) to heme O by substitution of the vinyl group on carbon 2 of heme B porphyrin ring with a hydroxyethyl farnesyl side group. This is Protoheme IX farnesyltransferase from Frankia casuarinae (strain DSM 45818 / CECT 9043 / HFP020203 / CcI3).